Here is a 97-residue protein sequence, read N- to C-terminus: uncharacterized protein (97 aa).

Positions 1–21 (MNKKFSISLLSTILAFLLVLG) are cleaved as a signal peptide. The N-palmitoyl cysteine moiety is linked to residue Cys22. Cys22 carries S-diacylglycerol cysteine lipidation.

To B.burgdorferi BBD15.

Its subcellular location is the cell membrane. This is an uncharacterized protein from Borreliella burgdorferi (strain ATCC 35210 / DSM 4680 / CIP 102532 / B31) (Borrelia burgdorferi).